The primary structure comprises 86 residues: Large ribosomal subunit protein bL27 (86 aa).

Positions methionine 1–threonine 10 are enriched in gly residues. A disordered region spans residues methionine 1–glycine 22.

This sequence belongs to the bacterial ribosomal protein bL27 family.

The polypeptide is Large ribosomal subunit protein bL27 (Polynucleobacter asymbioticus (strain DSM 18221 / CIP 109841 / QLW-P1DMWA-1) (Polynucleobacter necessarius subsp. asymbioticus)).